The primary structure comprises 847 residues: Vacuolar membrane protease (847 aa).

Residues 1–17 (MQFGKSLLKHVYTRTFK) lie on the Cytoplasmic side of the membrane. A helical membrane pass occupies residues 18–38 (SSLTCSIFAFTLLMIFFVLDW). The Vacuolar segment spans residues 39 to 348 (KRMNVYPRLD…GSYWQINLNL (310 aa)). Positions 146 and 158 each coordinate Zn(2+). The active-site Proton acceptor is glutamate 190. Glutamate 191 contacts Zn(2+). Asparagine 208 carries an N-linked (GlcNAc...) asparagine glycan. Glutamate 216 serves as a coordination point for Zn(2+). N-linked (GlcNAc...) asparagine glycosylation is present at asparagine 274. Histidine 291 serves as a coordination point for Zn(2+). A helical transmembrane segment spans residues 349–369 (HLFLNVVFLIACPAILFMCLF). Over 370–381 (RFPSLYAQLKKP) the chain is Cytoplasmic. Residues 382–402 (CYLICFTLSSLFVLIFDYVVV) traverse the membrane as a helical segment. The Vacuolar portion of the chain corresponds to 403–415 (QSLTKLNPYVIHS). Residues 416 to 436 (SPDAVLAFFFLTNLLGLVYSF) traverse the membrane as a helical segment. The Cytoplasmic segment spans residues 437–454 (RYVATHSRMSNEELSCIE). A helical transmembrane segment spans residues 455-475 (IVLIWYVSMFWYISLLIATLT). At 476–482 (SIVRGLG) the chain is on the vacuolar side. Residues 483–503 (SLYFVNFGFFCSFFCCILTLI) form a helical membrane-spanning segment. Over 504-560 (RVRYFVDRMVTINRPANPEQMPLVQSTSGNAYGTSRYPQHRLKAVVSKSASVKLNDN) the chain is Cytoplasmic. Residues 561-581 (LWSVLFFSCLVPLPLFTCYNL) form a helical membrane-spanning segment. The Vacuolar portion of the chain corresponds to 582–605 (LSEVFIPAVHQSLIDGPYSNTCYK). The helical transmembrane segment at 606-626 (FAVILVFMAIINSSPFVFRAL) threads the bilayer. The Cytoplasmic portion of the chain corresponds to 627–630 (SKKS). Residues 631–651 (SAILLMLWVSLLFNILRAEPF) traverse the membrane as a helical segment. Residues 652 to 847 (NEKAPIKFRV…LLKMSKTHVM (196 aa)) lie on the Vacuolar side of the membrane. N-linked (GlcNAc...) asparagine glycans are attached at residues asparagine 726, asparagine 734, asparagine 800, and asparagine 834.

It belongs to the peptidase M28 family. The cofactor is Zn(2+).

It is found in the vacuole membrane. In terms of biological role, may be involved in vacuolar sorting and osmoregulation. This chain is Vacuolar membrane protease, found in Schizosaccharomyces japonicus (strain yFS275 / FY16936) (Fission yeast).